The following is a 471-amino-acid chain: Glutamate--tRNA ligase (471 aa).

Positions 9–19 match the 'HIGH' region motif; the sequence is PSPTGYLHVGG. Residues C98, C100, C125, and H127 each contribute to the Zn(2+) site. The 'KMSKS' region signature appears at 237 to 241; that stretch reads KLSKR. ATP is bound at residue K240.

It belongs to the class-I aminoacyl-tRNA synthetase family. Glutamate--tRNA ligase type 1 subfamily. As to quaternary structure, monomer. Zn(2+) is required as a cofactor.

It is found in the cytoplasm. It catalyses the reaction tRNA(Glu) + L-glutamate + ATP = L-glutamyl-tRNA(Glu) + AMP + diphosphate. Functionally, catalyzes the attachment of glutamate to tRNA(Glu) in a two-step reaction: glutamate is first activated by ATP to form Glu-AMP and then transferred to the acceptor end of tRNA(Glu). The sequence is that of Glutamate--tRNA ligase from Citrobacter koseri (strain ATCC BAA-895 / CDC 4225-83 / SGSC4696).